Here is a 403-residue protein sequence, read N- to C-terminus: MRSTYLFTSESVSEGHPDKVSDQISDAIVDLFIGKDPEARVACETLTTTERVILAGEIRGQGIMDTDGNWAPGIEDEIEAAVRQTVKEIGYEQDGFHWETLTFENHLHGQSAHIAQGVDASGNKDEGAGDQGIMFGFACDETPDLMPAPIDYSHKILHRLATDRKNGNAPFLEPDSKSQVTLRYENGKPVACTAVVVSTQHGAGYDEGEKEAELRAYVKRVVADILPDGFLSDATKWHINPTGTFVIGGPDGDAGLTGRKIIVDTYGGAAPHGGGAFSGKDPTKVDRSAAYITRYLAKNVVAAGLATRCTIQIAYAIGVSQPLSLYVDTHGTGTVDDAAIEEAILDIEKLGGLTPRAIRTHLGLNKPIYRVSAAYGHFGRTAEGDRFPWERTDLVEDLKAALA.

Position 16 (His16) interacts with ATP. Asp18 contributes to the Mg(2+) binding site. Glu44 lines the K(+) pocket. Residues Glu57 and Gln110 each coordinate L-methionine. Residues 110–120 (QSAHIAQGVDA) are flexible loop. ATP contacts are provided by residues 175-177 (DSK), Asp253, 259-260 (RK), Ala276, and Lys280. Asp253 is a binding site for L-methionine. L-methionine is bound at residue Lys284.

The protein belongs to the AdoMet synthase family. In terms of assembly, homotetramer; dimer of dimers. It depends on Mg(2+) as a cofactor. K(+) is required as a cofactor.

It localises to the cytoplasm. The enzyme catalyses L-methionine + ATP + H2O = S-adenosyl-L-methionine + phosphate + diphosphate. The protein operates within amino-acid biosynthesis; S-adenosyl-L-methionine biosynthesis; S-adenosyl-L-methionine from L-methionine: step 1/1. Functionally, catalyzes the formation of S-adenosylmethionine (AdoMet) from methionine and ATP. The overall synthetic reaction is composed of two sequential steps, AdoMet formation and the subsequent tripolyphosphate hydrolysis which occurs prior to release of AdoMet from the enzyme. The protein is S-adenosylmethionine synthase of Erythrobacter litoralis (strain HTCC2594).